Reading from the N-terminus, the 213-residue chain is FMN-dependent NADH:quinone oxidoreductase (213 aa).

The protein belongs to the azoreductase type 1 family. As to quaternary structure, homodimer. FMN serves as cofactor.

The catalysed reaction is 2 a quinone + NADH + H(+) = 2 a 1,4-benzosemiquinone + NAD(+). The enzyme catalyses N,N-dimethyl-1,4-phenylenediamine + anthranilate + 2 NAD(+) = 2-(4-dimethylaminophenyl)diazenylbenzoate + 2 NADH + 2 H(+). In terms of biological role, quinone reductase that provides resistance to thiol-specific stress caused by electrophilic quinones. Its function is as follows. Also exhibits azoreductase activity. Catalyzes the reductive cleavage of the azo bond in aromatic azo compounds to the corresponding amines. The sequence is that of FMN-dependent NADH:quinone oxidoreductase from Streptococcus agalactiae serotype III (strain NEM316).